We begin with the raw amino-acid sequence, 236 residues long: Small ribosomal subunit protein uS2c (236 aa).

This sequence belongs to the universal ribosomal protein uS2 family.

Its subcellular location is the plastid. The protein localises to the chloroplast. The chain is Small ribosomal subunit protein uS2c (rps2) from Eucalyptus globulus subsp. globulus (Tasmanian blue gum).